The sequence spans 105 residues: Iron-sulfur cluster assembly protein CyaY (105 aa).

It belongs to the frataxin family.

Functionally, involved in iron-sulfur (Fe-S) cluster assembly. May act as a regulator of Fe-S biogenesis. This Paraburkholderia phytofirmans (strain DSM 17436 / LMG 22146 / PsJN) (Burkholderia phytofirmans) protein is Iron-sulfur cluster assembly protein CyaY.